A 217-amino-acid polypeptide reads, in one-letter code: UPF0502 protein Sfri_1696 (217 aa).

The protein belongs to the UPF0502 family.

This Shewanella frigidimarina (strain NCIMB 400) protein is UPF0502 protein Sfri_1696.